The primary structure comprises 300 residues: Protease HtpX homolog (300 aa).

2 consecutive transmembrane segments (helical) span residues 7 to 24 (GILM…GALI) and 29 to 46 (GAII…FTFW). His-130 lines the Zn(2+) pocket. Glu-131 is an active-site residue. His-134 serves as a coordination point for Zn(2+). The next 2 membrane-spanning stretches (helical) occupy residues 145 to 165 (VTAT…FFGG) and 174 to 194 (PMGL…AGLV). Glu-203 contributes to the Zn(2+) binding site.

The protein belongs to the peptidase M48B family. The cofactor is Zn(2+).

The protein resides in the cell inner membrane. This is Protease HtpX homolog from Cereibacter sphaeroides (strain ATCC 17029 / ATH 2.4.9) (Rhodobacter sphaeroides).